Here is a 389-residue protein sequence, read N- to C-terminus: Succinate--CoA ligase [ADP-forming] subunit beta (389 aa).

The ATP-grasp domain occupies 9-236 (RDMFEAHGVP…KDAADPLEAK (228 aa)). ATP contacts are provided by residues Lys-45, 52–54 (GRG), Ala-94, and Glu-99. Mg(2+) contacts are provided by Asn-191 and Asp-205. Substrate-binding positions include Asn-256 and 318–320 (GIT).

This sequence belongs to the succinate/malate CoA ligase beta subunit family. As to quaternary structure, heterotetramer of two alpha and two beta subunits. Mg(2+) is required as a cofactor.

The catalysed reaction is succinate + ATP + CoA = succinyl-CoA + ADP + phosphate. It catalyses the reaction GTP + succinate + CoA = succinyl-CoA + GDP + phosphate. The protein operates within carbohydrate metabolism; tricarboxylic acid cycle; succinate from succinyl-CoA (ligase route): step 1/1. Its function is as follows. Succinyl-CoA synthetase functions in the citric acid cycle (TCA), coupling the hydrolysis of succinyl-CoA to the synthesis of either ATP or GTP and thus represents the only step of substrate-level phosphorylation in the TCA. The beta subunit provides nucleotide specificity of the enzyme and binds the substrate succinate, while the binding sites for coenzyme A and phosphate are found in the alpha subunit. The protein is Succinate--CoA ligase [ADP-forming] subunit beta of Arthrobacter sp. (strain FB24).